Reading from the N-terminus, the 198-residue chain is Imidazoleglycerol-phosphate dehydratase (198 aa).

This sequence belongs to the imidazoleglycerol-phosphate dehydratase family.

Its subcellular location is the cytoplasm. The enzyme catalyses D-erythro-1-(imidazol-4-yl)glycerol 3-phosphate = 3-(imidazol-4-yl)-2-oxopropyl phosphate + H2O. Its pathway is amino-acid biosynthesis; L-histidine biosynthesis; L-histidine from 5-phospho-alpha-D-ribose 1-diphosphate: step 6/9. This Nitratidesulfovibrio vulgaris (strain DP4) (Desulfovibrio vulgaris) protein is Imidazoleglycerol-phosphate dehydratase.